Reading from the N-terminus, the 736-residue chain is Microtubule-associated protein mu-2 (736 aa).

Belongs to the orthoreovirus mu-2 protein family. Interacts with protein mu-NS; in viral inclusions. Interacts with polymerase lambda-3; this interaction stimulates the ATPase activity of mu-2. Requires a divalent metal cation as cofactor.

Its subcellular location is the virion. The protein resides in the host cytoplasm. It is found in the host cytoskeleton. In terms of biological role, minor inner capsid (core) component. Displays NTPase and RNA 5'-triphosphatase (RTPase) activities. ATP is the preferred substrate for hydrolysis. May function as a cofactor of polymerase lambda-3. Associates with microtubules and plays a role in the formation, structural organization and morphology of viral inclusions, where the assembly of cores and the replication of viral RNA occur. Together with mu-NS, recruits the other core proteins to these inclusions. This Mammalia (T1L) protein is Microtubule-associated protein mu-2 (M1).